Here is a 248-residue protein sequence, read N- to C-terminus: Triosephosphate isomerase (248 aa).

N10 and K12 together coordinate substrate. Catalysis depends on H95, which acts as the Electrophile. The Proton acceptor role is filled by E165.

This sequence belongs to the triosephosphate isomerase family. As to quaternary structure, homodimer.

The enzyme catalyses D-glyceraldehyde 3-phosphate = dihydroxyacetone phosphate. It functions in the pathway carbohydrate biosynthesis; gluconeogenesis. Its pathway is carbohydrate degradation; glycolysis; D-glyceraldehyde 3-phosphate from glycerone phosphate: step 1/1. The chain is Triosephosphate isomerase (TPI1) from Eremothecium gossypii (strain ATCC 10895 / CBS 109.51 / FGSC 9923 / NRRL Y-1056) (Yeast).